The primary structure comprises 461 residues: Cysteine--tRNA ligase (461 aa).

Cys28 is a Zn(2+) binding site. The short motif at 30-40 (ITIYDLCHIGH) is the 'HIGH' region element. Zn(2+) contacts are provided by Cys209, His234, and Glu238. Positions 266 to 270 (KMSKS) match the 'KMSKS' region motif. Lys269 contacts ATP.

This sequence belongs to the class-I aminoacyl-tRNA synthetase family. Monomer. Requires Zn(2+) as cofactor.

It is found in the cytoplasm. The enzyme catalyses tRNA(Cys) + L-cysteine + ATP = L-cysteinyl-tRNA(Cys) + AMP + diphosphate. The polypeptide is Cysteine--tRNA ligase (Photorhabdus laumondii subsp. laumondii (strain DSM 15139 / CIP 105565 / TT01) (Photorhabdus luminescens subsp. laumondii)).